A 346-amino-acid polypeptide reads, in one-letter code: Histone H1.8 (346 aa).

Low complexity-rich tracts occupy residues 1-23 and 38-48; these read MAPGSVTSDISPSSTSTAGSSRS and PGGPSHSSLPV. Disordered regions lie at residues 1-50 and 121-346; these read MAPG…PVGR and ATGS…RAEA. The region spanning 51-129 is the H15 domain; sequence RHPPVLRMVL…GATGSFKLVP (79 aa). Residues 128–137 show a composition bias toward basic residues; sequence VPKHKKKIQP. Positions 148–167 are enriched in basic and acidic residues; sequence RAGEAKGKGPKKPSEAKEDP. A Nuclear localization signal motif is present at residues 164 to 179; it reads KEDPPNVGKVKKAAKR. Residues 172 to 182 are compositionally biased toward basic residues; it reads KVKKAAKRPAK. Composition is skewed to basic and acidic residues over residues 205–225 and 251–262; these read KDTRAQSGEARKVPPKPDKAM and EAYRKTKAESKS. The segment covering 278–288 has biased composition (basic residues); sequence TKKKVVAKAKA. Residues 298-309 are compositionally biased toward low complexity; sequence KAAAPAKGSGSK. Positions 334-346 are enriched in polar residues; the sequence is ASSSKVSSQRAEA.

The protein belongs to the histone H1/H5 family. As to expression, oocyte-specific.

The protein localises to the cytoplasm. It is found in the nucleus. The protein resides in the chromosome. In terms of biological role, may play a key role in the control of gene expression during oogenesis and early embryogenesis, presumably through the perturbation of chromatin structure. Essential for meiotic maturation of germinal vesicle-stage oocytes. The somatic type linker histone H1c is rapidly replaced by H1oo in a donor nucleus transplanted into an oocyte. The greater mobility of H1oo as compared to H1c may contribute to this rapid replacement and increased instability of the embryonic chromatin structure. The rapid replacement of H1c with H1oo may play an important role in nuclear remodeling. The chain is Histone H1.8 from Homo sapiens (Human).